Reading from the N-terminus, the 430-residue chain is Adenylosuccinate synthetase (430 aa).

GTP contacts are provided by residues 12–18 (GDEGKGK) and 40–42 (GHT). Asp-13 functions as the Proton acceptor in the catalytic mechanism. 2 residues coordinate Mg(2+): Asp-13 and Gly-40. IMP is bound by residues 13–16 (DEGK), 38–41 (NAGH), Thr-128, Arg-142, Gln-223, Thr-238, and Arg-302. The active-site Proton donor is the His-41. 298 to 304 (TTTGRPR) contacts substrate. GTP is bound by residues Arg-304, 330-332 (SID), and 413-415 (SVG).

This sequence belongs to the adenylosuccinate synthetase family. As to quaternary structure, homodimer. Mg(2+) is required as a cofactor.

Its subcellular location is the cytoplasm. It carries out the reaction IMP + L-aspartate + GTP = N(6)-(1,2-dicarboxyethyl)-AMP + GDP + phosphate + 2 H(+). It functions in the pathway purine metabolism; AMP biosynthesis via de novo pathway; AMP from IMP: step 1/2. Plays an important role in the de novo pathway of purine nucleotide biosynthesis. Catalyzes the first committed step in the biosynthesis of AMP from IMP. In Lactococcus lactis subsp. cremoris (strain MG1363), this protein is Adenylosuccinate synthetase.